A 120-amino-acid chain; its full sequence is Ribosome-binding factor A (120 aa).

Belongs to the RbfA family. In terms of assembly, monomer. Binds 30S ribosomal subunits, but not 50S ribosomal subunits or 70S ribosomes.

It is found in the cytoplasm. Its function is as follows. One of several proteins that assist in the late maturation steps of the functional core of the 30S ribosomal subunit. Associates with free 30S ribosomal subunits (but not with 30S subunits that are part of 70S ribosomes or polysomes). Required for efficient processing of 16S rRNA. May interact with the 5'-terminal helix region of 16S rRNA. This Dictyoglomus thermophilum (strain ATCC 35947 / DSM 3960 / H-6-12) protein is Ribosome-binding factor A.